The primary structure comprises 382 residues: Galactokinase (382 aa).

34 to 37 (EHTD) contributes to the substrate binding site. 124–130 (GAGLSSS) provides a ligand contact to ATP. Mg(2+)-binding residues include S130 and E162. Catalysis depends on D174, which acts as the Proton acceptor. Y223 lines the substrate pocket.

The protein belongs to the GHMP kinase family. GalK subfamily.

It localises to the cytoplasm. It carries out the reaction alpha-D-galactose + ATP = alpha-D-galactose 1-phosphate + ADP + H(+). Its pathway is carbohydrate metabolism; galactose metabolism. Functionally, catalyzes the transfer of the gamma-phosphate of ATP to D-galactose to form alpha-D-galactose-1-phosphate (Gal-1-P). In Escherichia coli O81 (strain ED1a), this protein is Galactokinase.